The primary structure comprises 65 residues: Alpha-toxin Bot11 (65 aa).

The 63-residue stretch at 2-64 (KDGYIVDDRN…VRTVQAGRCR (63 aa)) folds into the LCN-type CS-alpha/beta domain. Cystine bridges form between cysteine 12/cysteine 63, cysteine 16/cysteine 36, cysteine 22/cysteine 46, and cysteine 26/cysteine 48.

The protein belongs to the long (4 C-C) scorpion toxin superfamily. Sodium channel inhibitor family. Alpha subfamily. Expressed by the venom gland.

It localises to the secreted. In terms of biological role, alpha toxins bind voltage-independently at site-3 of sodium channels (Nav) and inhibit the inactivation of the activated channels, thereby blocking neuronal transmission. The polypeptide is Alpha-toxin Bot11 (Buthus occitanus tunetanus (Common European scorpion)).